The primary structure comprises 103 residues: Small ribosomal subunit protein uS10 (103 aa).

Belongs to the universal ribosomal protein uS10 family. As to quaternary structure, part of the 30S ribosomal subunit.

Involved in the binding of tRNA to the ribosomes. This is Small ribosomal subunit protein uS10 from Shewanella loihica (strain ATCC BAA-1088 / PV-4).